We begin with the raw amino-acid sequence, 467 residues long: tRNA-2-methylthio-N(6)-dimethylallyladenosine synthase (467 aa).

In terms of domain architecture, MTTase N-terminal spans 2–118; it reads PSVFIKTFGC…VAEIADNLLK (117 aa). 6 residues coordinate [4Fe-4S] cluster: cysteine 11, cysteine 47, cysteine 81, cysteine 159, cysteine 163, and cysteine 166. Residues 145-379 form the Radical SAM core domain; that stretch reads TKAQPIAYVS…LEIQNKITME (235 aa). The region spanning 382 to 445 is the TRAM domain; it reads QKWVGQVVEI…GHTFYGTPLI (64 aa).

Belongs to the methylthiotransferase family. MiaB subfamily. In terms of assembly, monomer. The cofactor is [4Fe-4S] cluster.

It is found in the cytoplasm. It catalyses the reaction N(6)-dimethylallyladenosine(37) in tRNA + (sulfur carrier)-SH + AH2 + 2 S-adenosyl-L-methionine = 2-methylsulfanyl-N(6)-dimethylallyladenosine(37) in tRNA + (sulfur carrier)-H + 5'-deoxyadenosine + L-methionine + A + S-adenosyl-L-homocysteine + 2 H(+). In terms of biological role, catalyzes the methylthiolation of N6-(dimethylallyl)adenosine (i(6)A), leading to the formation of 2-methylthio-N6-(dimethylallyl)adenosine (ms(2)i(6)A) at position 37 in tRNAs that read codons beginning with uridine. This chain is tRNA-2-methylthio-N(6)-dimethylallyladenosine synthase, found in Methylacidiphilum infernorum (isolate V4) (Methylokorus infernorum (strain V4)).